Here is a 956-residue protein sequence, read N- to C-terminus: Thrombospondin-3 (956 aa).

Residues 1–21 (MEKPELWGVLALLLLCSYTCG) form the signal peptide. In terms of domain architecture, Laminin G-like spans 22-193 (SQDLQVIDLL…VESMKIILGG (172 aa)). Intrachain disulfides connect Cys-278–Cys-289, Cys-283–Cys-300, Cys-303–Cys-314, Cys-320–Cys-332, Cys-326–Cys-341, Cys-344–Cys-368, Cys-374–Cys-388, Cys-382–Cys-397, Cys-400–Cys-412, Cys-418–Cys-432, Cys-426–Cys-442, Cys-444–Cys-455, Cys-471–Cys-478, Cys-483–Cys-503, Cys-519–Cys-539, Cys-542–Cys-562, Cys-578–Cys-598, Cys-601–Cys-621, Cys-639–Cys-659, Cys-679–Cys-699, and Cys-715–Cys-936. Residue Asn-310 is glycosylated (N-linked (GlcNAc...) asparagine). The EGF-like 1; calcium-binding domain occupies 316-354 (DINECAHADPCFPGSSCINTMPGFHCEACPPGYKGTRVS). Positions 370–410 (DIDECNDGNNGGCDPNSICTNTVGSFKCGPCRLGFLGNQSQ) constitute an EGF-like 2; calcium-binding domain. A glycan (N-linked (GlcNAc...) asparagine) is linked at Asn-407. In terms of domain architecture, EGF-like 3 spans 414 to 456 (PARTCHSPAHSPCHIHAHCLFERNGAVSCQCNVGWAGNGNVCG). 8 TSP type-3 repeats span residues 457–491 (PDTDIDGYPDQALPCMDNNKHCKQDNCLLTPNSGQ), 492–527 (EDADNDGVGDQCDDDADGDGIKNVEDNCRLFPNKDQ), 528–550 (QNSDTDSFGDACDNCPNVPNNDQ), 551–586 (KDTDGNGEGDACDNDVDGDGIPNGLDNCPKVPNPLQ), 587–609 (TDRDEDGVGDACDSCPEMSNPTQ), 610–647 (TDADSDLVGDVCDTNEDSDGDGHQDTKDNCPQLPNSSQ), 648–687 (LDSDNDGLGDECDGDDDNDGVPDYIPPGPDNCRLVPNPNQ), and 688–723 (KDSDGNGVGDVCEDDFDNDAVVDPLDVCPESAEVTL). 2 disordered regions span residues 518–537 (NCRLFPNKDQQNSDTDSFGD) and 546–699 (PNND…GDVC). A compositionally biased stretch (acidic residues) spans 555 to 568 (GNGEGDACDNDVDG). Acidic residues predominate over residues 612 to 628 (ADSDLVGDVCDTNEDSD). N-linked (GlcNAc...) asparagine glycosylation occurs at Asn-644. The segment covering 650 to 667 (SDNDGLGDECDGDDDNDG) has biased composition (acidic residues). A TSP C-terminal domain is found at 727–941 (RAYQTVILDP…LQYRCNDTVP (215 aa)). Asn-937 carries N-linked (GlcNAc...) asparagine glycosylation.

Belongs to the thrombospondin family. As to quaternary structure, oligomer; disulfide-linked. As to expression, brain, lung and cartilage.

Its function is as follows. Adhesive glycoprotein that mediates cell-to-cell and cell-to-matrix interactions. Can bind to fibrinogen, fibronectin, laminin and type V collagen. This is Thrombospondin-3 (Thbs3) from Mus musculus (Mouse).